We begin with the raw amino-acid sequence, 712 residues long: Elongation factor G (712 aa).

The 283-residue stretch at 8-290 (TRYRNIGISA…AVIEFLPSPT (283 aa)) folds into the tr-type G domain. Residues 17–24 (AHIDAGKT), 88–92 (DTPGH), and 142–145 (NKMD) contribute to the GTP site.

It belongs to the TRAFAC class translation factor GTPase superfamily. Classic translation factor GTPase family. EF-G/EF-2 subfamily.

The protein resides in the cytoplasm. Its function is as follows. Catalyzes the GTP-dependent ribosomal translocation step during translation elongation. During this step, the ribosome changes from the pre-translocational (PRE) to the post-translocational (POST) state as the newly formed A-site-bound peptidyl-tRNA and P-site-bound deacylated tRNA move to the P and E sites, respectively. Catalyzes the coordinated movement of the two tRNA molecules, the mRNA and conformational changes in the ribosome. The sequence is that of Elongation factor G from Acinetobacter baumannii (strain SDF).